The following is a 93-amino-acid chain: DNA/RNA-binding protein Alba 2 (93 aa).

It belongs to the histone-like Alba family.

It is found in the cytoplasm. The protein resides in the chromosome. Functionally, binds double-stranded DNA tightly but without sequence specificity. Involved in DNA compaction. In Methanopyrus kandleri (strain AV19 / DSM 6324 / JCM 9639 / NBRC 100938), this protein is DNA/RNA-binding protein Alba 2.